The sequence spans 130 residues: Cytidine deaminase (130 aa).

In terms of domain architecture, CMP/dCMP-type deaminase spans 3 to 130; it reads VNLEWIIKQL…ELLMNGFKKS (128 aa). Substrate is bound at residue 43–45; the sequence is NIE. C54 contributes to the Zn(2+) binding site. Catalysis depends on E56, which acts as the Proton donor. The Zn(2+) site is built by C88 and C91.

This sequence belongs to the cytidine and deoxycytidylate deaminase family. As to quaternary structure, homodimer. Zn(2+) serves as cofactor.

The catalysed reaction is cytidine + H2O + H(+) = uridine + NH4(+). The enzyme catalyses 2'-deoxycytidine + H2O + H(+) = 2'-deoxyuridine + NH4(+). This enzyme scavenges exogenous and endogenous cytidine and 2'-deoxycytidine for UMP synthesis. This is Cytidine deaminase (cdd) from Mycoplasma genitalium (strain ATCC 33530 / DSM 19775 / NCTC 10195 / G37) (Mycoplasmoides genitalium).